The primary structure comprises 843 residues: MDKVRIHEIASELGLKSKDVLQKAQEMGLKVKSPSSGVSFEEAEKLTDYIINGPAEAVAAKPQEKPKKSAPKKEEKPKEEVKKEAEEKVAASKKEEEKPQEKKSVEESLTPPSLKKRRGLVIVKKKRPKVEPKVEEKEAKQETPQVTAEEETPLTLKRKPKKAKKSTPPAKKNEGKKIEILEDRDLSDVSMELEEEVVVLPDFSEELQKVEEEQKPKEPQKKNKQVKVARKSFAIEQQGISRSKKKKRKKKESKSETEIKVVELPEEVRVYEFAEKIGKSVGEVIKVLFNLGMMATKNDFLDKETLEILAEEFDVEIKIKNVLEELDYVKVYDAVEDDYLEERPPVITIMGHVDHGKTSLLDYIRNSKIAEREAGGITQHIGAYMIEKDGKRITFIDTPGHEAFTEMRARGAQATDIAIIVVAADDGVKPQTVEAVNHAKTADVPMIVAINKIDKPEANPDLVKSQLAEIGITPTEWGGEYEFVEVSAKTGQGVDDLLDTILLQAEIMELKANPKREAKAVVIESSLEKGRGPVATVIVKNGTLRVGDHVVCGVAFGRVRAIIDDLGKMIKERKPSEPGVVVGLDKVPPAGEILVAVKDAEEARMYAERRAEYERQKELSKTTKVSLEELSQLVKEGQLKKLPVIIKADTQGSLEAIKGSLEKLKNEEVKVDIIHAGVGAISESDVTLADASENAVILGFNVRPTGAVKEKAKQLGVNIKTYSIIYDLIDDVKALLSGMLSPIIKEEVIGQAEVRETFNVPKIGTVAGCLVTDGVIERNAKARVIRDGVVIYDSKISSLKRFKEDVREVTKGYECGLMIENFNDIKVGDVIEAYKEVEEAATL.

2 disordered regions span residues 55-185 and 209-228; these read AEAV…EDRD and KVEEEQKPKEPQKKNKQVKV. A compositionally biased stretch (basic and acidic residues) spans 62–106; it reads PQEKPKKSAPKKEEKPKEEVKKEAEEKVAASKKEEEKPQEKKSVE. A compositionally biased stretch (basic residues) spans 114–128; sequence LKKRRGLVIVKKKRP. The span at 129–141 shows a compositional bias: basic and acidic residues; sequence KVEPKVEEKEAKQ. A compositionally biased stretch (basic residues) spans 156–165; the sequence is LKRKPKKAKK. Composition is skewed to basic and acidic residues over residues 171-185 and 209-221; these read KKNEGKKIEILEDRD and KVEEEQKPKEPQK. The tr-type G domain maps to 342 to 511; that stretch reads ERPPVITIMG…LLQAEIMELK (170 aa). Residues 351–358 are G1; sequence GHVDHGKT. 351 to 358 contacts GTP; sequence GHVDHGKT. The interval 376 to 380 is G2; sequence GITQH. Residues 397-400 are G3; it reads DTPG. GTP contacts are provided by residues 397 to 401 and 451 to 454; these read DTPGH and NKID. The interval 451-454 is G4; sequence NKID. The tract at residues 487-489 is G5; sequence SAK.

The protein belongs to the TRAFAC class translation factor GTPase superfamily. Classic translation factor GTPase family. IF-2 subfamily.

Its subcellular location is the cytoplasm. One of the essential components for the initiation of protein synthesis. Protects formylmethionyl-tRNA from spontaneous hydrolysis and promotes its binding to the 30S ribosomal subunits. Also involved in the hydrolysis of GTP during the formation of the 70S ribosomal complex. The protein is Translation initiation factor IF-2 of Nitratiruptor sp. (strain SB155-2).